Here is a 410-residue protein sequence, read N- to C-terminus: Tryptophan synthase beta chain (410 aa).

Residue K100 is modified to N6-(pyridoxal phosphate)lysine.

This sequence belongs to the TrpB family. As to quaternary structure, tetramer of two alpha and two beta chains. The cofactor is pyridoxal 5'-phosphate.

The catalysed reaction is (1S,2R)-1-C-(indol-3-yl)glycerol 3-phosphate + L-serine = D-glyceraldehyde 3-phosphate + L-tryptophan + H2O. It participates in amino-acid biosynthesis; L-tryptophan biosynthesis; L-tryptophan from chorismate: step 5/5. Functionally, the beta subunit is responsible for the synthesis of L-tryptophan from indole and L-serine. The sequence is that of Tryptophan synthase beta chain from Pyrobaculum aerophilum (strain ATCC 51768 / DSM 7523 / JCM 9630 / CIP 104966 / NBRC 100827 / IM2).